The following is a 223-amino-acid chain: MDAKQIAQFIDHTALTAEKTEQDIIQLCDEAITHQFWSVCINSAYIPLAKQKLAGTPVKICTVVGFPLGANLSTVKAFETTEAIKAGADEIDMVINVGWIKSNKWDAVEKDIATVLAACAGKPLKVILETCLLSKDEIVKACEICKTLNVAFVKTSTGFNRGGATKEDVALMKRTVGDIGVKASGGVRDTETAIAMINAGASRIGASAGIAIIHGLQDVSSTY.

Residue Asp92 is the Proton donor/acceptor of the active site. Residue Lys154 is the Schiff-base intermediate with acetaldehyde of the active site. The Proton donor/acceptor role is filled by Lys182.

This sequence belongs to the DeoC/FbaB aldolase family. DeoC type 1 subfamily.

It is found in the cytoplasm. It catalyses the reaction 2-deoxy-D-ribose 5-phosphate = D-glyceraldehyde 3-phosphate + acetaldehyde. Its pathway is carbohydrate degradation; 2-deoxy-D-ribose 1-phosphate degradation; D-glyceraldehyde 3-phosphate and acetaldehyde from 2-deoxy-alpha-D-ribose 1-phosphate: step 2/2. Catalyzes a reversible aldol reaction between acetaldehyde and D-glyceraldehyde 3-phosphate to generate 2-deoxy-D-ribose 5-phosphate. The chain is Deoxyribose-phosphate aldolase from Pasteurella multocida (strain Pm70).